The sequence spans 236 residues: MALKTLSAKAAAALDRELMSTGAFSIDQLMELAGLSVSQAVARVHPTKQGRRVLVAVGPGNNGGDGLVAARHLFHYGYQPAIYYPKRPKNDLYQRLVKQCEDLEIPFVDDFFAALESTDHVVDAIFGFSFSGEVREPFPAVINAMAETKVPVTSVDAPSSWDINEGPPKSGVGSNFHPNVLVSLTAPKPLVKYFKGRHFVGGRFVAPSIAKKYDFDVPKYEGIDQIVEITDNQVKI.

The region spanning Ala-11–Val-217 is the YjeF N-terminal domain. Residue Asn-61–Asp-65 coordinates (6S)-NADPHX. The K(+) site is built by Asn-62 and Asp-123. (6S)-NADPHX contacts are provided by residues Gly-127 to Glu-133 and Asp-156. Ser-159 serves as a coordination point for K(+).

Belongs to the NnrE/AIBP family. K(+) serves as cofactor.

The protein resides in the cytoplasm. Its subcellular location is the mitochondrion. The enzyme catalyses (6R)-NADHX = (6S)-NADHX. It carries out the reaction (6R)-NADPHX = (6S)-NADPHX. Functionally, catalyzes the epimerization of the S- and R-forms of NAD(P)HX, a damaged form of NAD(P)H that is a result of enzymatic or heat-dependent hydration. This is a prerequisite for the S-specific NAD(P)H-hydrate dehydratase to allow the repair of both epimers of NAD(P)HX. In Neurospora crassa (strain ATCC 24698 / 74-OR23-1A / CBS 708.71 / DSM 1257 / FGSC 987), this protein is NAD(P)H-hydrate epimerase.